The following is an 84-amino-acid chain: Small ribosomal subunit protein uS17 (84 aa).

Belongs to the universal ribosomal protein uS17 family. As to quaternary structure, part of the 30S ribosomal subunit.

In terms of biological role, one of the primary rRNA binding proteins, it binds specifically to the 5'-end of 16S ribosomal RNA. This Photorhabdus laumondii subsp. laumondii (strain DSM 15139 / CIP 105565 / TT01) (Photorhabdus luminescens subsp. laumondii) protein is Small ribosomal subunit protein uS17.